The following is a 305-amino-acid chain: Cytochrome c biogenesis protein CcsA (305 aa).

8 consecutive transmembrane segments (helical) span residues 11–31 (ANASFALLLITMLIYGMKAIF), 36–56 (ILQLFGTLGILFSNFLVALLL), 75–95 (LMFLCWCFTFFHLLIEKYIQI), 97–117 (FIGFITVPIAMLVNAFATFFL), 142–162 (IMMASYAALILGSLLSIAFLF), 212–232 (TIGIGFPLLTIGIISGAVWAN), 239–259 (WSWDPKETWALITWIIFAIYL), and 273–293 (AIVAFIGFVIVWVCYLGVNLL).

It belongs to the CcmF/CycK/Ccl1/NrfE/CcsA family. In terms of assembly, may interact with Ccs1.

The protein resides in the plastid. It localises to the chloroplast thylakoid membrane. In terms of biological role, required during biogenesis of c-type cytochromes (cytochrome c6 and cytochrome f) at the step of heme attachment. The polypeptide is Cytochrome c biogenesis protein CcsA (Mesostigma viride (Green alga)).